The following is a 92-amino-acid chain: Small ribosomal subunit protein uS19 (92 aa).

This sequence belongs to the universal ribosomal protein uS19 family.

Its function is as follows. Protein S19 forms a complex with S13 that binds strongly to the 16S ribosomal RNA. This chain is Small ribosomal subunit protein uS19, found in Hyphomonas neptunium (strain ATCC 15444).